The sequence spans 363 residues: Tetraacyldisaccharide 4'-kinase (363 aa).

ATP is bound at residue 62-69 (RVGGTGKT).

The protein belongs to the LpxK family.

The catalysed reaction is a lipid A disaccharide + ATP = a lipid IVA + ADP + H(+). Its pathway is glycolipid biosynthesis; lipid IV(A) biosynthesis; lipid IV(A) from (3R)-3-hydroxytetradecanoyl-[acyl-carrier-protein] and UDP-N-acetyl-alpha-D-glucosamine: step 6/6. Transfers the gamma-phosphate of ATP to the 4'-position of a tetraacyldisaccharide 1-phosphate intermediate (termed DS-1-P) to form tetraacyldisaccharide 1,4'-bis-phosphate (lipid IVA). The polypeptide is Tetraacyldisaccharide 4'-kinase (Polynucleobacter asymbioticus (strain DSM 18221 / CIP 109841 / QLW-P1DMWA-1) (Polynucleobacter necessarius subsp. asymbioticus)).